We begin with the raw amino-acid sequence, 426 residues long: tRNA(Ile)-lysidine synthase (426 aa).

ATP is bound at residue 21–26; it reads SGGLDS.

Belongs to the tRNA(Ile)-lysidine synthase family.

Its subcellular location is the cytoplasm. It carries out the reaction cytidine(34) in tRNA(Ile2) + L-lysine + ATP = lysidine(34) in tRNA(Ile2) + AMP + diphosphate + H(+). Its function is as follows. Ligates lysine onto the cytidine present at position 34 of the AUA codon-specific tRNA(Ile) that contains the anticodon CAU, in an ATP-dependent manner. Cytidine is converted to lysidine, thus changing the amino acid specificity of the tRNA from methionine to isoleucine. This chain is tRNA(Ile)-lysidine synthase, found in Enterobacter sp. (strain 638).